We begin with the raw amino-acid sequence, 455 residues long: Venom prothrombin activator notecarin-D1 (455 aa).

Positions 1-20 (MAPQLLLCLILTFLWSLPEA) are cleaved as a signal peptide. A propeptide spanning residues 21-40 (ESNVFLKSKVANRFLQRTKR) is cleaved from the precursor. The Gla domain maps to 41-86 (SNSLFEEIRPGNIERECIEEKCSKEEAREVFEDNEKTETFWNVYVD). A 4-carboxyglutamate mark is found at glutamate 46, glutamate 47, glutamate 54, glutamate 56, glutamate 59, glutamate 60, glutamate 65, glutamate 66, glutamate 69, glutamate 72, and glutamate 75. Residues cysteine 57 and cysteine 62 are joined by a disulfide bond. One can recognise an EGF-like 1; calcium-binding domain in the interval 86 to 122 (DGDQCSSNPCHYRGTCKDGIGSYTCTCLPNYEGKNCE). Disulfide bonds link cysteine 90–cysteine 101, cysteine 95–cysteine 110, cysteine 112–cysteine 121, cysteine 129–cysteine 140, cysteine 136–cysteine 149, cysteine 151–cysteine 164, cysteine 172–cysteine 328, cysteine 216–cysteine 221, cysteine 236–cysteine 252, cysteine 376–cysteine 390, and cysteine 401–cysteine 429. The O-linked (Hex...) serine glycan is linked to serine 92. The 36-residue stretch at 129–164 (CRVDNGNCWHFCKRVQSETQCSCAESYRLGVDGHSC) folds into the EGF-like 2 domain. A propeptide spans 182–209 (REASLPDFVQSQKATLLKKSDNPSPDIR) (activation peptide). In terms of domain architecture, Peptidase S1 spans 210–453 (IVNGMDCKLG…FIPWIKKIMS (244 aa)). The active-site Charge relay system is histidine 251. Residue asparagine 254 is glycosylated (N-linked (GlcNAc...) asparagine). The active-site Charge relay system is the aspartate 308. Serine 405 (charge relay system) is an active-site residue.

This sequence belongs to the peptidase S1 family. Snake venom subfamily. In terms of assembly, heterodimer of a light chain and a heavy chain; disulfide-linked. In terms of processing, gamma-carboxyglutamate residues are formed by vitamin K dependent carboxylation. These residues are essential for the binding of calcium. Expressed by the venom gland.

Its subcellular location is the secreted. It carries out the reaction Selective cleavage of Arg-|-Thr and then Arg-|-Ile bonds in prothrombin to form thrombin.. In terms of biological role, snake prothrombin activator that attacks the hemostatic system of prey. This protein is functionally similar to blood coagulation factor Xa. The polypeptide is Venom prothrombin activator notecarin-D1 (Notechis scutatus scutatus (Mainland tiger snake)).